Consider the following 434-residue polypeptide: UDP-N-acetylmuramate--L-alanine ligase (434 aa).

Residue 108 to 114 (GSHGKTT) participates in ATP binding.

Belongs to the MurCDEF family.

It is found in the cytoplasm. The enzyme catalyses UDP-N-acetyl-alpha-D-muramate + L-alanine + ATP = UDP-N-acetyl-alpha-D-muramoyl-L-alanine + ADP + phosphate + H(+). It functions in the pathway cell wall biogenesis; peptidoglycan biosynthesis. In terms of biological role, cell wall formation. This chain is UDP-N-acetylmuramate--L-alanine ligase, found in Geobacillus kaustophilus (strain HTA426).